The chain runs to 447 residues: Glucose-6-phosphate isomerase (447 aa).

Catalysis depends on E287, which acts as the Proton donor. Active-site residues include H308 and K422.

Belongs to the GPI family.

It is found in the cytoplasm. The enzyme catalyses alpha-D-glucose 6-phosphate = beta-D-fructose 6-phosphate. It participates in carbohydrate biosynthesis; gluconeogenesis. It functions in the pathway carbohydrate degradation; glycolysis; D-glyceraldehyde 3-phosphate and glycerone phosphate from D-glucose: step 2/4. In terms of biological role, catalyzes the reversible isomerization of glucose-6-phosphate to fructose-6-phosphate. This chain is Glucose-6-phosphate isomerase, found in Heliobacterium modesticaldum (strain ATCC 51547 / Ice1).